We begin with the raw amino-acid sequence, 151 residues long: Ribonuclease H (151 aa).

Positions 1–143 (MYKKIEIFTD…CDQLARLAAK (143 aa)) constitute an RNase H type-1 domain. Residues Asp-10, Glu-48, Asp-70, and Asp-135 each coordinate Mg(2+).

Belongs to the RNase H family. Monomer. Mg(2+) serves as cofactor.

The protein resides in the cytoplasm. It carries out the reaction Endonucleolytic cleavage to 5'-phosphomonoester.. Functionally, endonuclease that specifically degrades the RNA of RNA-DNA hybrids. This Blochmanniella pennsylvanica (strain BPEN) protein is Ribonuclease H.